A 189-amino-acid chain; its full sequence is GMP synthase [glutamine-hydrolyzing] subunit A (189 aa).

Positions 5-189 constitute a Glutamine amidotransferase type-1 domain; the sequence is KILVVNNYGQ…TNFLEICEKY (185 aa). The Nucleophile role is filled by cysteine 79. Active-site residues include histidine 166 and glutamate 168.

As to quaternary structure, heterodimer composed of a glutamine amidotransferase subunit (A) and a GMP-binding subunit (B).

It carries out the reaction XMP + L-glutamine + ATP + H2O = GMP + L-glutamate + AMP + diphosphate + 2 H(+). The protein operates within purine metabolism; GMP biosynthesis; GMP from XMP (L-Gln route): step 1/1. Functionally, catalyzes the synthesis of GMP from XMP. The chain is GMP synthase [glutamine-hydrolyzing] subunit A from Methanosarcina barkeri (strain Fusaro / DSM 804).